A 67-amino-acid chain; its full sequence is Large ribosomal subunit protein bL35 (67 aa).

The disordered stretch occupies residues 22-52 (VLAGPGKKRHNLSARSQKAKRQNRGSQVLTH). The segment covering 27–44 (GKKRHNLSARSQKAKRQN) has biased composition (basic residues).

This sequence belongs to the bacterial ribosomal protein bL35 family.

This chain is Large ribosomal subunit protein bL35, found in Granulibacter bethesdensis (strain ATCC BAA-1260 / CGDNIH1).